The following is a 123-amino-acid chain: Ribosome-binding factor A (123 aa).

It belongs to the RbfA family. As to quaternary structure, monomer. Binds 30S ribosomal subunits, but not 50S ribosomal subunits or 70S ribosomes.

It is found in the cytoplasm. One of several proteins that assist in the late maturation steps of the functional core of the 30S ribosomal subunit. Associates with free 30S ribosomal subunits (but not with 30S subunits that are part of 70S ribosomes or polysomes). Required for efficient processing of 16S rRNA. May interact with the 5'-terminal helix region of 16S rRNA. This is Ribosome-binding factor A from Prochlorococcus marinus (strain NATL1A).